The sequence spans 154 residues: Large ribosomal subunit protein uL13 (154 aa).

This sequence belongs to the universal ribosomal protein uL13 family. Part of the 50S ribosomal subunit.

Functionally, this protein is one of the early assembly proteins of the 50S ribosomal subunit, although it is not seen to bind rRNA by itself. It is important during the early stages of 50S assembly. This Agrobacterium fabrum (strain C58 / ATCC 33970) (Agrobacterium tumefaciens (strain C58)) protein is Large ribosomal subunit protein uL13.